The primary structure comprises 202 residues: 3-isopropylmalate dehydratase small subunit (202 aa).

It belongs to the LeuD family. LeuD type 1 subfamily. Heterodimer of LeuC and LeuD.

It catalyses the reaction (2R,3S)-3-isopropylmalate = (2S)-2-isopropylmalate. It functions in the pathway amino-acid biosynthesis; L-leucine biosynthesis; L-leucine from 3-methyl-2-oxobutanoate: step 2/4. In terms of biological role, catalyzes the isomerization between 2-isopropylmalate and 3-isopropylmalate, via the formation of 2-isopropylmaleate. In Nocardia farcinica (strain IFM 10152), this protein is 3-isopropylmalate dehydratase small subunit.